Reading from the N-terminus, the 261-residue chain is 5'-nucleotidase SurE (261 aa).

A divalent metal cation-binding residues include Asp-8, Asp-9, Ser-43, and Asn-96.

This sequence belongs to the SurE nucleotidase family. It depends on a divalent metal cation as a cofactor.

Its subcellular location is the cytoplasm. It carries out the reaction a ribonucleoside 5'-phosphate + H2O = a ribonucleoside + phosphate. In terms of biological role, nucleotidase that shows phosphatase activity on nucleoside 5'-monophosphates. In Cereibacter sphaeroides (strain ATCC 17029 / ATH 2.4.9) (Rhodobacter sphaeroides), this protein is 5'-nucleotidase SurE.